We begin with the raw amino-acid sequence, 160 residues long: Cytochrome b6-f complex subunit 4 (160 aa).

The next 3 membrane-spanning stretches (helical) occupy residues 36 to 56 (LLYT…GLAV), 95 to 115 (LLGV…PFIE), and 131 to 151 (TVFL…TLPI).

This sequence belongs to the cytochrome b family. PetD subfamily. The 4 large subunits of the cytochrome b6-f complex are cytochrome b6, subunit IV (17 kDa polypeptide, petD), cytochrome f and the Rieske protein, while the 4 small subunits are petG, petL, petM and petN. The complex functions as a dimer.

The protein localises to the plastid. It localises to the chloroplast thylakoid membrane. Its function is as follows. Component of the cytochrome b6-f complex, which mediates electron transfer between photosystem II (PSII) and photosystem I (PSI), cyclic electron flow around PSI, and state transitions. The sequence is that of Cytochrome b6-f complex subunit 4 from Mesostigma viride (Green alga).